We begin with the raw amino-acid sequence, 147 residues long: Orcokinin peptides (147 aa).

A signal peptide spans 1 to 27 (MPRHSVFALSILALSITATVWIPTVQA). Propeptides lie at residues 28 to 89 (ETNL…ERFG) and 146 to 147 (FG).

It belongs to the orcokinin family.

It localises to the secreted. Functionally, myotropic peptides. The protein is Orcokinin peptides of Apis mellifera (Honeybee).